A 299-amino-acid polypeptide reads, in one-letter code: MSATATLPAVRGKLTPQAPLAPLVWFKSGGAADWLFEPKDVDDLADFLRDLDPAIPVMALGLGSNLIVRDGGFPGVVVRLGKAFAKVEPIDATTLRCGGGASGILVSSTARDAGIAGMEFLRSIPGTVGGFVRMNGGAYGGEVKDILVDCDVVLRSGERKTLALADLGYTYRHSELPEGAVVVGATFRGRPGASAAIQAEMDRISASREASQPLRSRTGGSTFKNPAGHKAWQLVDAAGCRGLMVGGAQVSEKHTNFLINTGDATSADIEALGEEVRRRVKDKSGIELQWEIQRVGKAE.

Positions 27–192 constitute an FAD-binding PCMH-type domain; the sequence is KSGGAADWLF…VGATFRGRPG (166 aa). R172 is a catalytic residue. Residues 206–225 are disordered; sequence ASREASQPLRSRTGGSTFKN. Polar residues predominate over residues 208-224; it reads REASQPLRSRTGGSTFK. The active-site Proton donor is S221. E291 is an active-site residue.

Belongs to the MurB family. Requires FAD as cofactor.

It is found in the cytoplasm. The enzyme catalyses UDP-N-acetyl-alpha-D-muramate + NADP(+) = UDP-N-acetyl-3-O-(1-carboxyvinyl)-alpha-D-glucosamine + NADPH + H(+). It functions in the pathway cell wall biogenesis; peptidoglycan biosynthesis. Cell wall formation. The polypeptide is UDP-N-acetylenolpyruvoylglucosamine reductase (Sphingopyxis alaskensis (strain DSM 13593 / LMG 18877 / RB2256) (Sphingomonas alaskensis)).